We begin with the raw amino-acid sequence, 1165 residues long: Valine--tRNA ligase (1165 aa).

Residues 43 to 53 (PNVTGSLHMGH) carry the 'HIGH' region motif. The 'KMSKS' region motif lies at 800-804 (KMSKT). Lys803 is an ATP binding site. Coiled coils occupy residues 1001 to 1032 (KNEDEIYEEDKQKVERLKEIISAIRAIRSDLQ) and 1097 to 1165 (HVDL…VLRS).

The protein belongs to the class-I aminoacyl-tRNA synthetase family. ValS type 1 subfamily. As to quaternary structure, monomer.

The protein localises to the cytoplasm. The enzyme catalyses tRNA(Val) + L-valine + ATP = L-valyl-tRNA(Val) + AMP + diphosphate. Catalyzes the attachment of valine to tRNA(Val). As ValRS can inadvertently accommodate and process structurally similar amino acids such as threonine, to avoid such errors, it has a 'posttransfer' editing activity that hydrolyzes mischarged Thr-tRNA(Val) in a tRNA-dependent manner. The chain is Valine--tRNA ligase from Aquifex aeolicus (strain VF5).